Here is a 942-residue protein sequence, read N- to C-terminus: Lon protease homolog 4, chloroplastic/mitochondrial (942 aa).

Ser54 carries the post-translational modification Phosphoserine. The 223-residue stretch at 79 to 301 (VIALPLPHKP…LTLELVKKEV (223 aa)) folds into the Lon N-terminal domain. Residue 456 to 463 (GPTGVGKT) coordinates ATP. A disordered region spans residues 673–725 (ISDDVTTDTEETKSLAKTDLESPETSAEGSTVLTDELATGDPTESTTEQSGEV). Over residues 682–692 (EETKSLAKTDL) the composition is skewed to basic and acidic residues. The span at 695–705 (PETSAEGSTVL) shows a compositional bias: polar residues. The region spanning 756 to 940 (QTPVGVVMGL…EQIFELAFGY (185 aa)) is the Lon proteolytic domain. Residues Ser846 and Lys889 contribute to the active site.

The protein belongs to the peptidase S16 family. In terms of assembly, homohexamer or homoheptamer. Organized in a ring with a central cavity.

Its subcellular location is the mitochondrion matrix. It is found in the plastid. The protein resides in the chloroplast thylakoid membrane. The catalysed reaction is Hydrolysis of proteins in presence of ATP.. In terms of biological role, ATP-dependent serine protease that mediates the selective degradation of misfolded, unassembled or oxidatively damaged polypeptides as well as certain short-lived regulatory proteins in the mitochondrial matrix. May also have a chaperone function in the assembly of inner membrane protein complexes. Participates in the regulation of mitochondrial gene expression and in the maintenance of the integrity of the mitochondrial genome. Binds to mitochondrial DNA in a site-specific manner. The chain is Lon protease homolog 4, chloroplastic/mitochondrial (LON4) from Arabidopsis thaliana (Mouse-ear cress).